A 119-amino-acid polypeptide reads, in one-letter code: Microtubule nucleation factor SSNA1 (119 aa).

Threonine 2 carries the N-acetylthreonine modification. The interval 2–32 (TQQGAALQNYNNELVKCIEELCQKREELCRQ) is important for localization to the centrosome. Residues 13-70 (NELVKCIEELCQKREELCRQIQQEEDEKQRLQNEVRQLTEKLARVNENLARKIASRNE) are a coiled coil.

It belongs to the SSNA1 family. As to quaternary structure, self-associates to form fibrils. Also forms dimers as well as monomers. Interacts with SPAST.

It is found in the nucleus. It localises to the cytoplasm. The protein localises to the cytoskeleton. Its subcellular location is the microtubule organizing center. The protein resides in the centrosome. It is found in the centriole. It localises to the midbody. The protein localises to the flagellum basal body. Its subcellular location is the flagellum axoneme. The protein resides in the cell projection. It is found in the axon. Its function is as follows. Microtubule-binding protein which stabilizes dynamic microtubules by slowing growth and shrinkage at both plus and minus ends and serves as a sensor of microtubule damage, protecting microtubules from the microtubule-severing enzyme SPAST. Induces microtubule branching which is mediated by the formation of long SSNA1 fibrils which guide microtubule protofilaments to split apart from the mother microtubule and form daughter microtubules. Plays a role in axon outgrowth and branching. Required for cell division. This Mus musculus (Mouse) protein is Microtubule nucleation factor SSNA1.